A 1381-amino-acid chain; its full sequence is Hepatocyte growth factor receptor (1381 aa).

The signal sequence occupies residues 1 to 24; it reads MKALAVLGPGLLVHLLTLVQKSGG. Residues 25–932 lie on the Extracellular side of the membrane; the sequence is ECKEALVKSA…VIVQPDQNFT (908 aa). In terms of domain architecture, Sema spans 27 to 515; sequence KEALVKSAMN…TGKTITKIPL (489 aa). 2 N-linked (GlcNAc...) asparagine glycosylation sites follow: Asn-45 and Asn-74. 6 disulfides stabilise this stretch: Cys-95–Cys-101, Cys-98–Cys-159, Cys-133–Cys-141, Cys-172–Cys-175, Cys-298–Cys-363, and Cys-385–Cys-397. The N-linked (GlcNAc...) asparagine glycan is linked to Asn-106. The N-linked (GlcNAc...) asparagine glycan is linked to Asn-358. A glycan (N-linked (GlcNAc...) asparagine) is linked at Asn-399. Intrachain disulfides connect Cys-520-Cys-538, Cys-526-Cys-561, Cys-529-Cys-545, and Cys-541-Cys-551. IPT/TIG domains are found at residues 563–655, 657–739, and 742–836; these read PTIY…FSYV, PIIT…FNYR, and PIVD…LIYV. Thr-582 carries an O-linked (Man) threonine glycan. 2 N-linked (GlcNAc...) asparagine glycosylation sites follow: Asn-607 and Asn-635. O-linked (Man) threonine glycans are attached at residues Thr-676 and Thr-761. N-linked (GlcNAc...) asparagine glycans are attached at residues Asn-785, Asn-879, and Asn-930. The chain crosses the membrane as a helical span at residues 933–955; it reads GLIVGVISISVLLSLLFGLFLWL. Residues 956–1381 are Cytoplasmic-facing; the sequence is KRRKQIKDLG…QDHVDGEGDT (426 aa). Ser-966 is subject to Phosphoserine. Phosphothreonine is present on Thr-977. Phosphoserine is present on residues Ser-990, Ser-997, and Ser-1000. At Tyr-1003 the chain carries Phosphotyrosine. Positions 1078-1345 constitute a Protein kinase domain; that stretch reads VHFNEVIGRG…RISAIFSAFI (268 aa). ATP is bound by residues 1084–1092 and Lys-1110; that span reads IGRGHFGCV. The Proton acceptor role is filled by Asp-1204. The tract at residues 1212 to 1381 is interaction with RANBP9; the sequence is LDENFTVKVA…QDHVDGEGDT (170 aa). Phosphotyrosine is present on Tyr-1230. Tyr-1234 and Tyr-1235 each carry phosphotyrosine; by autocatalysis. Thr-1289 carries the phosphothreonine modification. The segment at 1320 to 1359 is interaction with MUC20; it reads WHPKAEQRPSFAELVSRISAIFSAFIGEHYVHVNATYVNV. Residues Tyr-1349 and Tyr-1356 each carry the phosphotyrosine; by autocatalysis modification. Phosphotyrosine is present on Tyr-1365.

It belongs to the protein kinase superfamily. Tyr protein kinase family. Heterodimer made of an alpha chain (50 kDa) and a beta chain (145 kDa) which are disulfide linked. Binds PLXNB1. Interacts when phosphorylated with downstream effectors including STAT3, PIK3R1, SRC, PCLG1, GRB2 and GAB1. Interacts with SPSB1, SPSB2 and SPSB4. Interacts with INPP5D/SHIP1. When phosphorylated at Tyr-1356, interacts with INPPL1/SHIP2. Interacts with RANBP9 and RANBP10, as well as SPSB1, SPSB2, SPSB3 and SPSB4. SPSB1 binding occurs in the presence and in the absence of HGF, however HGF treatment has a positive effect on this interaction. Interacts with MUC20; prevents interaction with GRB2 and suppresses hepatocyte growth factor-induced cell proliferation. Interacts with GRB10. Interacts with PTPN1 and PTPN2. Interacts with HSP90AA1 and HSP90AB1; the interaction suppresses MET kinase activity. Interacts with tensin TNS3. Interacts (when phosphorylated) with tensin TNS4 (via SH2 domain); the interaction increases MET protein stability by inhibiting MET endocytosis and subsequent lysosomal degradation. In terms of processing, autophosphorylated in response to ligand binding on Tyr-1234 and Tyr-1235 in the kinase domain leading to further phosphorylation of Tyr-1349 and Tyr-1356 in the C-terminal multifunctional docking site. Dephosphorylated by PTPRJ at Tyr-1349 and Tyr-1365. Dephosphorylated by PTPN1 and PTPN2. Post-translationally, ubiquitinated. Ubiquitination by CBL regulates the receptor stability and activity through proteasomal degradation. O-mannosylation of IPT/TIG domains by TMEM260 is required for protein maturation. O-mannosylated residues are composed of single mannose glycans that are not elongated or modified.

It is found in the membrane. It carries out the reaction L-tyrosyl-[protein] + ATP = O-phospho-L-tyrosyl-[protein] + ADP + H(+). In its inactive state, the C-terminal tail interacts with the catalytic domain and inhibits the kinase activity. Upon ligand binding, the C-terminal tail is displaced and becomes phosphorylated, thus increasing the kinase activity. Receptor tyrosine kinase that transduces signals from the extracellular matrix into the cytoplasm by binding to hepatocyte growth factor/HGF ligand. Regulates many physiological processes including proliferation, scattering, morphogenesis and survival. Ligand binding at the cell surface induces autophosphorylation of MET on its intracellular domain that provides docking sites for downstream signaling molecules. Following activation by ligand, interacts with the PI3-kinase subunit PIK3R1, PLCG1, SRC, GRB2, STAT3 or the adapter GAB1. Recruitment of these downstream effectors by MET leads to the activation of several signaling cascades including the RAS-ERK, PI3 kinase-AKT, or PLCgamma-PKC. The RAS-ERK activation is associated with the morphogenetic effects while PI3K/AKT coordinates prosurvival effects. During embryonic development, MET signaling plays a role in gastrulation, development and migration of muscles and neuronal precursors, angiogenesis and kidney formation. In adults, participates in wound healing as well as organ regeneration and tissue remodeling. Also promotes differentiation and proliferation of hematopoietic cells. In Rhinolophus ferrumequinum (Greater horseshoe bat), this protein is Hepatocyte growth factor receptor (MET).